A 314-amino-acid polypeptide reads, in one-letter code: Putative 4-hydroxy-2-oxoglutarate aldolase, mitochondrial (314 aa).

50–51 (TN) provides a ligand contact to substrate. Lys-171 serves as the catalytic Schiff-base intermediate with substrate.

Belongs to the DapA family.

It catalyses the reaction (4S)-4-hydroxy-2-oxoglutarate = glyoxylate + pyruvate. The enzyme catalyses (4R)-4-hydroxy-2-oxoglutarate = glyoxylate + pyruvate. Functionally, may catalyze the final step in the metabolic pathway of hydroxyproline. The sequence is that of Putative 4-hydroxy-2-oxoglutarate aldolase, mitochondrial from Coccidioides immitis (strain RS) (Valley fever fungus).